The following is a 199-amino-acid chain: MSDNLNMTAPGAGTGYSGDIFDRLLRERIIFLGSQVDDEIANKLCAQILLLSAEDPTRDISLYINSPGGSVTAGMAIYDTMKYSPCDIATYGMGLAASMGQFLLSGGTPGKRYALPHARIMMHQPSAGVGGTAADIAIQAEQFAQTKREMAKLIAEHTGQTFEQVTKDSDRDRWFTAEQAKEYGLVDHVITLAEGPISN.

Residue S98 is the Nucleophile of the active site. The active site involves H123.

This sequence belongs to the peptidase S14 family. Fourteen ClpP subunits assemble into 2 heptameric rings which stack back to back to give a disk-like structure with a central cavity, resembling the structure of eukaryotic proteasomes.

The protein localises to the cytoplasm. The catalysed reaction is Hydrolysis of proteins to small peptides in the presence of ATP and magnesium. alpha-casein is the usual test substrate. In the absence of ATP, only oligopeptides shorter than five residues are hydrolyzed (such as succinyl-Leu-Tyr-|-NHMec, and Leu-Tyr-Leu-|-Tyr-Trp, in which cleavage of the -Tyr-|-Leu- and -Tyr-|-Trp bonds also occurs).. In terms of biological role, cleaves peptides in various proteins in a process that requires ATP hydrolysis. Has a chymotrypsin-like activity. Plays a major role in the degradation of misfolded proteins. The protein is ATP-dependent Clp protease proteolytic subunit 2 of Corynebacterium efficiens (strain DSM 44549 / YS-314 / AJ 12310 / JCM 11189 / NBRC 100395).